Consider the following 293-residue polypeptide: Glycine N-methyltransferase (293 aa).

Val-2 carries the N-acetylvaline modification. Residues Ser-4 and Tyr-6 each coordinate (6S)-5-methyl-5,6,7,8-tetrahydrofolate. Ser-10 is modified (phosphoserine). Residues Tyr-22, Trp-31, Tyr-34, and Arg-41 each contribute to the S-adenosyl-L-methionine site. Position 34 is a phosphotyrosine (Tyr-34). Lys-46 carries the N6-succinyllysine modification. Residues Ala-65, 86–88 (DAS), 117–118 (NW), 137–140 (LGNS), and Arg-176 each bind S-adenosyl-L-methionine. Lys-191, Lys-196, and Lys-201 each carry N6-succinyllysine. His-215 provides a ligand contact to (6S)-5-methyl-5,6,7,8-tetrahydrofolate. Tyr-221 serves as a coordination point for S-adenosyl-L-methionine. A (6S)-5-methyl-5,6,7,8-tetrahydrofolate-binding site is contributed by Arg-240.

The protein belongs to the class I-like SAM-binding methyltransferase superfamily. Glycine N-methyltransferase family. As to quaternary structure, homotetramer. In terms of tissue distribution, abundant in liver.

The protein resides in the cytoplasm. The enzyme catalyses glycine + S-adenosyl-L-methionine = sarcosine + S-adenosyl-L-homocysteine + H(+). Inhibited by 5-methyltetrahydrofolate monoglutamate and by 5-methyltetrahydrofolate pentaglutamate, inhibition is much more effective by the pentaglutamate form than by the monoglutamate form. Two molecules of 5-methyltetrahydrofolate are bound per tetramer. The binding sites are localized between subunits. Inhibitor binding may preclude movements of the polypeptide chain that are necessary for enzyme activity. Its function is as follows. Catalyzes the methylation of glycine by using S-adenosylmethionine (AdoMet) to form N-methylglycine (sarcosine) with the concomitant production of S-adenosylhomocysteine (AdoHcy), a reaction regulated by the binding of 5-methyltetrahydrofolate. Possible crucial role in the regulation of tissue concentration of AdoMet and of metabolism of methionine. This chain is Glycine N-methyltransferase (Gnmt), found in Rattus norvegicus (Rat).